Consider the following 1017-residue polypeptide: Protein HIR2 (1017 aa).

WD repeat units follow at residues 10-49 (YHNG…ELSK), 74-117 (CHKS…QLFP), 124-163 (SEVN…FQEL), 167-208 (CHEK…DDTS), 228-271 (PLNV…TNIE), 275-326 (GHDF…PITV), and 330-371 (AVQG…YTFS). The segment at 417 to 561 (ISTTTSSSNT…APSDLPRSNS (145 aa)) is disordered. Acidic residues predominate over residues 473-483 (LDDDIDGDGDD). 2 stretches are compositionally biased toward polar residues: residues 518-535 (SDST…VTTK) and 545-561 (LISS…RSNS).

It belongs to the WD repeat HIR1 family.

Its subcellular location is the nucleus. Functionally, required for replication-independent chromatin assembly and for the periodic repression of histone gene transcription during the cell cycle. This chain is Protein HIR2 (HIR2), found in Candida albicans (strain SC5314 / ATCC MYA-2876) (Yeast).